Consider the following 493-residue polypeptide: Calcium-binding tyrosine phosphorylation-regulated protein (493 aa).

Positions Tyr12–Gly49 constitute an RIIa domain. 4 disordered regions span residues Glu85 to Glu164, Asp244 to Pro271, Asn330 to Gly354, and Ile426 to Glu493. Over residues Ser90–Glu100 the composition is skewed to polar residues. The span at Lys101–Asp117 shows a compositional bias: basic and acidic residues. The segment covering Ser141 to Pro152 has biased composition (low complexity). Thr151 is modified (phosphothreonine). Phosphoserine is present on Ser155. 2 stretches are compositionally biased toward polar residues: residues Ile426–Pro442 and Ser461–Gly470. Over residues Ile484 to Glu493 the composition is skewed to acidic residues.

In terms of assembly, interacts with FSCB. Isoform 3 self-associates. Isoform 3 and isoform 5 interact with GSK3B. Isoform 1 does not interact with GSK3B. In terms of processing, isoform 1 is phosphorylated on tyrosine residues during in vitro capacitation. Isoform 3 and isoform 5 are phosphorylated by GSK3B in vitro. Dephosphorylation affects its ability to bind calcium. Expressed in elongating spermatids and spermatozoa (at protein level). Isoform 1 is expressed in testis. Isoform 3 and isoform 5 are also expressed in brain, pancreas and numerous brain tumors.

It localises to the cytoplasm. The protein localises to the cytoskeleton. It is found in the cell projection. The protein resides in the cilium. Its subcellular location is the flagellum. It localises to the nucleus. Functionally, may function as a regulator of both motility- and head-associated functions such as capacitation and the acrosome reaction. Isoform 1 binds calcium in vitro. Isoform 2 and isoform 6 probably bind calcium. Isoform 3 and isoform 5 do not bind calcium in vitro. Isoform 4 probably does not bind calcium. The sequence is that of Calcium-binding tyrosine phosphorylation-regulated protein (CABYR) from Homo sapiens (Human).